Reading from the N-terminus, the 208-residue chain is LysM and putative peptidoglycan-binding domain-containing protein 2 (208 aa).

Residues 1–54 (MAEFSPVLPPLRDDGGGGRYGQPLFPRSRSGSESDSELSQSLARTKTRSYGSTA) form a disordered region. Low complexity predominate over residues 27-42 (RSRSGSESDSELSQSL). Residues 65–109 (IEHRVTDGETLQGIALKYGVTMEQIKRVNKLFSNDCIFLRNTLSI) form the LysM domain. Disordered regions lie at residues 122 to 169 (LSLE…EELS) and 187 to 208 (AARK…YQEI). A compositionally biased stretch (polar residues) spans 129 to 140 (SEGNTPQESPCV). Residues 147 to 156 (PSPPPEPSVP) show a composition bias toward pro residues.

The protein is LysM and putative peptidoglycan-binding domain-containing protein 2 (lysmd2) of Danio rerio (Zebrafish).